A 689-amino-acid polypeptide reads, in one-letter code: Solute carrier organic anion transporter family member 1B2 (689 aa).

Over 1-26 (MDQTQHPSKAAQPLRSEKTRHCDGFR) the chain is Cytoplasmic. The chain crosses the membrane as a helical span at residues 27-46 (IFLAALSFSYICKALGGVIM). The Extracellular portion of the chain corresponds to 47–65 (KSSITQIERRFDIPSSISG). Residues 66 to 86 (LIDGGFEIGNLLVIVFVSYFG) traverse the membrane as a helical segment. Topologically, residues 87–92 (SKLHRP) are cytoplasmic. A helical transmembrane segment spans residues 93 to 117 (KLIGTGCFIMGIGSILTALPHFFMG). Residues 118-163 (YYRYATENDISSLHNSTLTCLVNQTTSLTGTSPEIMEKGCEKGSNS) lie on the Extracellular side of the membrane. N-linked (GlcNAc...) asparagine glycans are attached at residues N132 and N140. The chain crosses the membrane as a helical span at residues 164–192 (YTWIYVLMGNMLRGIGETPIVPLGVSYID). Residues 193–211 (DFAKEGNSSMYLGTLHTIA) are Cytoplasmic-facing. Residues 212-232 (MIGPILGFIMSSVFAKLYVDV) traverse the membrane as a helical segment. Residues 233–250 (GYVDLRSVRITPQDARWV) are Extracellular-facing. The chain crosses the membrane as a helical span at residues 251-275 (GAWWLGFIVNGLLCIICSIPFFFLP). The Cytoplasmic segment spans residues 276-326 (KIPKRSQKERKNSASLHVLKTDEDKNPVTNPTTQEKQAPANLTGFLWSLRS). S288 and S290 each carry phosphoserine. A helical transmembrane segment spans residues 327 to 348 (ILTNEQYVIFLILTLLQISSFI). The Extracellular segment spans residues 349 to 368 (GSFTYLFKFIEQQFGQTASQ). The helical transmembrane segment at 369–392 (ANFLLGVITIPTMASGMFLGGYLI) threads the bilayer. Residues 393-396 (KRLK) lie on the Cytoplasmic side of the membrane. The chain crosses the membrane as a helical span at residues 397 to 420 (LTLLGITKFVFFTTTMAYVFYLSY). Over 421–533 (FLLICENKAF…DKCKTKYYFY (113 aa)) the chain is Extracellular. In terms of domain architecture, Kazal-like spans 448–505 (DVPLSYCNSDCICDKNQWEPVCGENGVTYISPCLAGCKSFRGDKKLMNIEFYDCSCVS). Intrachain disulfides connect C454-C484, C460-C480, and C469-C503. Residue N513 is glycosylated (N-linked (GlcNAc...) asparagine). Residues 534–556 (ITFQVIISFFTALGSTSLMLILI) form a helical membrane-spanning segment. The Cytoplasmic segment spans residues 557-565 (RSVQPELKS). The chain crosses the membrane as a helical span at residues 566 to 591 (LGMGFHSLVVRTLGGILAPVYYGALI). Over 592-625 (DRTCMKWSVTSCGARGACRLYNSRLFGMIYVGLS) the chain is Extracellular. A helical transmembrane segment spans residues 626–643 (IALKTPILLLYVALIYVM). Over 644–689 (KRKMKRNDNKILENGRKFTDEGNPEPVNNNGYSCVPSDEKNSETPL) the chain is Cytoplasmic. The interval 658–689 (GRKFTDEGNPEPVNNNGYSCVPSDEKNSETPL) is disordered. T662 carries the post-translational modification Phosphothreonine. At S680 the chain carries Phosphoserine. Positions 680-689 (SDEKNSETPL) are enriched in basic and acidic residues.

Belongs to the organo anion transporter (TC 2.A.60) family. In terms of tissue distribution, liver specific.

It is found in the cell membrane. It carries out the reaction estrone 3-sulfate(out) = estrone 3-sulfate(in). The enzyme catalyses taurocholate(out) = taurocholate(in). The catalysed reaction is prostaglandin E2(out) = prostaglandin E2(in). It catalyses the reaction L-thyroxine(out) = L-thyroxine(in). Its function is as follows. Mediates the Na(+)-independent uptake of organic anions such as taurochlate, bromosulfophthalein and steroid conjugates (estrone 3-sulfate, 17-beta-glucuronosyl estradiol, dehydroepiandrosterone sulfate). Also transports prostaglandin E2 and L-thyroxine (T4). Shows a pH-sensitive substrate specificity which may be ascribed to the protonation state of the binding site and leads to a stimulation of substrate transport in an acidic microenvironment. Hydrogencarbonate/HCO3(-) acts as the probable counteranion that exchanges for organic anions. This Mus musculus (Mouse) protein is Solute carrier organic anion transporter family member 1B2 (Slco1b2).